We begin with the raw amino-acid sequence, 196 residues long: Pyridoxal 5'-phosphate synthase subunit PdxT (196 aa).

Residue 47–49 (GES) coordinates L-glutamine. The Nucleophile role is filled by cysteine 79. L-glutamine contacts are provided by residues arginine 106 and 134-135 (IR). Catalysis depends on charge relay system residues histidine 170 and glutamate 172.

It belongs to the glutaminase PdxT/SNO family. In the presence of PdxS, forms a dodecamer of heterodimers. Only shows activity in the heterodimer.

The catalysed reaction is aldehydo-D-ribose 5-phosphate + D-glyceraldehyde 3-phosphate + L-glutamine = pyridoxal 5'-phosphate + L-glutamate + phosphate + 3 H2O + H(+). The enzyme catalyses L-glutamine + H2O = L-glutamate + NH4(+). Its pathway is cofactor biosynthesis; pyridoxal 5'-phosphate biosynthesis. Its function is as follows. Catalyzes the hydrolysis of glutamine to glutamate and ammonia as part of the biosynthesis of pyridoxal 5'-phosphate. The resulting ammonia molecule is channeled to the active site of PdxS. The sequence is that of Pyridoxal 5'-phosphate synthase subunit PdxT from Bacillus pumilus (strain SAFR-032).